The sequence spans 458 residues: Cysteine protease ATG4C (458 aa).

N-acetylmethionine is present on Met1. Cys111 functions as the Nucleophile in the catalytic mechanism. Catalysis depends on residues Asp345 and His347. Ser451 bears the Phosphoserine mark. Phosphothreonine is present on Thr452.

The protein belongs to the peptidase C54 family.

The protein resides in the cytoplasm. The catalysed reaction is [protein]-C-terminal L-amino acid-glycyl-phosphatidylethanolamide + H2O = [protein]-C-terminal L-amino acid-glycine + a 1,2-diacyl-sn-glycero-3-phosphoethanolamine. With respect to regulation, inhibited by N-ethylmaleimide. Cysteine protease that plays a key role in autophagy by mediating both proteolytic activation and delipidation of ATG8 family proteins. The protease activity is required for proteolytic activation of ATG8 family proteins: cleaves the C-terminal amino acid of ATG8 proteins MAP1LC3 and GABARAPL2, to reveal a C-terminal glycine. Exposure of the glycine at the C-terminus is essential for ATG8 proteins conjugation to phosphatidylethanolamine (PE) and insertion to membranes, which is necessary for autophagy. In addition to the protease activity, also mediates delipidation of ATG8 family proteins. Catalyzes delipidation of PE-conjugated forms of ATG8 proteins during macroautophagy. Compared to ATG4B, the major protein for proteolytic activation of ATG8 proteins, shows weaker ability to cleave the C-terminal amino acid of ATG8 proteins, while it displays stronger delipidation activity. In contrast to other members of the family, weakly or not involved in phagophore growth during mitophagy. This Homo sapiens (Human) protein is Cysteine protease ATG4C.